Reading from the N-terminus, the 149-residue chain is Transcriptional repressor NrdR (149 aa).

The segment at 3-34 is a zinc-finger region; it reads CPFCSATDTKVIDSRLVAEGHQVRRRRECTEC. One can recognise an ATP-cone domain in the interval 49-139; that stretch reads PRVIKRDGTR…VYRAFEDVSE (91 aa).

It belongs to the NrdR family. Requires Zn(2+) as cofactor.

Its function is as follows. Negatively regulates transcription of bacterial ribonucleotide reductase nrd genes and operons by binding to NrdR-boxes. The sequence is that of Transcriptional repressor NrdR from Shewanella sp. (strain MR-4).